Consider the following 122-residue polypeptide: Acidic phospholipase A2 homolog vipoxin A chain (122 aa).

7 disulfides stabilise this stretch: C26-C115, C28-C44, C43-C95, C49-C122, C50-C88, C57-C81, and C75-C86.

The protein belongs to the phospholipase A2 family. Group II subfamily. D49 sub-subfamily. In terms of assembly, heterodimer of A and B (AC P14420) chains; non-covalently linked. The A chain (acidic) is non-toxic, and increases the toxicity of the B chain (basic). The A chain may act as factor stabilizing the complex structure and hence retaining its toxicity by preventing non-specific binding. Upon binding to the target membranes the A chain may dissociate. As to expression, expressed by the venom gland.

The protein resides in the secreted. Its function is as follows. Heterodimer: postsynaptic neurotoxin. In terms of biological role, monomer: Acidic phospholipase A2 homolog that is non-toxic. The chain is Acidic phospholipase A2 homolog vipoxin A chain from Vipera ammodytes meridionalis (Eastern sand viper).